The primary structure comprises 500 residues: NAD(P)H-quinone oxidoreductase chain 4, chloroplastic (500 aa).

The next 14 helical transmembrane spans lie at 4–24, 31–51, 87–107, 113–130, 134–154, 167–187, 208–228, 242–262, 272–292, 305–325, 330–350, 386–406, 416–436, and 462–482; these read FPWL…LFFL, LIKW…TYAF, IGPI…AWPV, LFHF…GSFS, LLLF…LLSM, FILY…GLGL, ALEI…SPII, HYST…YGLV, AHSI…IYAA, IAYS…SITD, GAIL…FLAG, LALP…GIIT, ILIT…SLSM, and LFVS…PDFV.

Belongs to the complex I subunit 4 family.

Its subcellular location is the plastid. It localises to the chloroplast thylakoid membrane. It catalyses the reaction a plastoquinone + NADH + (n+1) H(+)(in) = a plastoquinol + NAD(+) + n H(+)(out). The enzyme catalyses a plastoquinone + NADPH + (n+1) H(+)(in) = a plastoquinol + NADP(+) + n H(+)(out). The sequence is that of NAD(P)H-quinone oxidoreductase chain 4, chloroplastic from Gossypium barbadense (Sea Island cotton).